The chain runs to 415 residues: PRKCA-binding protein (415 aa).

In terms of domain architecture, PDZ spans 22–105 (KVTLQKDAQN…EVTIHYNKLQ (84 aa)). C44 and C46 together coordinate Zn(2+). T82 is subject to Phosphothreonine. One can recognise an AH domain in the interval 144–357 (LCNDGLVKRL…CYAVLRDADV (214 aa)). Positions 376–415 (EEFTDGEEEEEEEDTAAGEPSRDTRGAAGPLDKGGSWCDS) are disordered. A compositionally biased stretch (acidic residues) spans 377–391 (EFTDGEEEEEEEDTA). C413 carries S-palmitoyl cysteine; by DHHC8 lipidation.

Monomer and homodimer. Interacts with CXADR. Interacts presynaptically with the glutamate receptors GRIA2, GRIA3, GRIK3, isoform 3 of GRIA4, isoform A of GRM4, GRM7 and GRM8; with NAPA and NAPB; and with BTG2. The interaction with NAPA and NAPB disrupts the interaction with GRIA2, conducting to the internalization of GRIA2. Interacts with PRKCA; with the amine transporters SLC6A2 and SLC6A3; with the channels ASIC1 and ASIC2; with the GTP-binding proteins ARF1 and ARF3; with the ephrin receptor tyrosine kinases EPHA7, EPHB1 and EPHB2; with ERBB2 and through its PDZ domain with the C-terminal tail of PRLHR. Interacts with UNC5A. Interacts (via AH domain) with NCS1/FREQ; in a calcium-dependent manner. Interacts with F-actin and associates with the ARP2/3 complex. Interacts (via PDZ domain) with ARF1 (activated); the interaction blocks Arp2/3 complex inhibition. Interacts with SORCS3. Post-translationally, phosphorylation at Thr-82 appears to inhibit the interaction with AMPA receptors. Palmitoylation on Cys-413 is essential for long-term synaptic depression (LTD). In terms of tissue distribution, ubiquitous.

It is found in the cytoplasm. It localises to the perinuclear region. The protein localises to the membrane. The protein resides in the postsynaptic density. Its subcellular location is the synapse. It is found in the synaptosome. It localises to the cytoskeleton. Probable adapter protein that bind to and organize the subcellular localization of a variety of membrane proteins containing some PDZ recognition sequence. Involved in the clustering of various receptors, possibly by acting at the receptor internalization level. Plays a role in synaptic plasticity by regulating the trafficking and internalization of AMPA receptors. May be regulated upon PRKCA activation. May regulate ASIC1/ASIC3 channel. Regulates actin polymerization by inhibiting the actin-nucleating activity of the Arp2/3 complex; the function is competitive with nucleation promoting factors and is linked to neuronal morphology regulation and AMPA receptor (AMPAR) endocytosis. Via interaction with the Arp2/3 complex involved in regulation of synaptic plasicity of excitatory synapses and required for spine shrinkage during long-term depression (LTD). Involved in regulation of astrocyte morphology, antagonistic to Arp2/3 complex activator WASL/N-WASP function. This chain is PRKCA-binding protein (PICK1), found in Homo sapiens (Human).